Consider the following 430-residue polypeptide: MRIGFLGFGKSNRSLLKYLLKHQEAKFFVSEAKTLDGETKKFLEEHSVEYEEGGHTEKLLECDVVYVSPGIKPDTSMIELLSSRGAKLSTELQFFLDNVDPKKVVGITGTDGKSTATALMHHVLSERGFKSFLGGNFGTPAVEALEGEYDYYVLEMSSFQLFWSERPYLSNFLVLNISEDHLDWHSSFEEYVDSKLKPVFLQTEGDLFVYNKHIERLKDLEGVRSRKIPFWTDENFATEKELIVRGKRYTLPGNYPYQMRENVLAVSVLYMEMFNELESFLELLRDFKPLPHRMEYLGQIDGRHFYNDSKATSTHAVLGALSNFDKVVLIMCGIGKKENYSLFVEKASPKLKHLIMFGEISKELAPFVGKIPHSIVENMEEAFEKAMEVSEKGDVILLSPGGASFDMYENYAKRGEHFREIFKRHGGDEV.

Position 109–115 (109–115 (GTDGKST)) interacts with ATP.

The protein belongs to the MurCDEF family.

It localises to the cytoplasm. It catalyses the reaction UDP-N-acetyl-alpha-D-muramoyl-L-alanine + D-glutamate + ATP = UDP-N-acetyl-alpha-D-muramoyl-L-alanyl-D-glutamate + ADP + phosphate + H(+). It functions in the pathway cell wall biogenesis; peptidoglycan biosynthesis. In terms of biological role, cell wall formation. Catalyzes the addition of glutamate to the nucleotide precursor UDP-N-acetylmuramoyl-L-alanine (UMA). The protein is UDP-N-acetylmuramoylalanine--D-glutamate ligase of Thermotoga petrophila (strain ATCC BAA-488 / DSM 13995 / JCM 10881 / RKU-1).